The following is a 459-amino-acid chain: Serine carboxypeptidase-like 27 (459 aa).

Residues 1 to 20 form the signal peptide; the sequence is MDYSFLLIILLLTISTSCCA. Intrachain disulfides connect Cys91–Cys344, Cys252–Cys264, and Cys288–Cys312. A glycan (N-linked (GlcNAc...) asparagine) is linked at Asn142. The active site involves Ser184. Asn289 and Asn333 each carry an N-linked (GlcNAc...) asparagine glycan. Active-site residues include Asp381 and His433.

It belongs to the peptidase S10 family. As to expression, ubiquitous.

The protein localises to the secreted. Probable carboxypeptidase. This chain is Serine carboxypeptidase-like 27 (SCPL27), found in Arabidopsis thaliana (Mouse-ear cress).